The chain runs to 594 residues: UvrABC system protein C (594 aa).

The GIY-YIG domain occupies Ser13–Ile99. Residues Asp205 to Ile240 enclose the UVR domain.

The protein belongs to the UvrC family. Interacts with UvrB in an incision complex.

Its subcellular location is the cytoplasm. Functionally, the UvrABC repair system catalyzes the recognition and processing of DNA lesions. UvrC both incises the 5' and 3' sides of the lesion. The N-terminal half is responsible for the 3' incision and the C-terminal half is responsible for the 5' incision. In Helicobacter pylori (strain J99 / ATCC 700824) (Campylobacter pylori J99), this protein is UvrABC system protein C.